The sequence spans 501 residues: MLATAGSLIATIWAALHLRTLLVAALTFLLLADYFKTRRPKNYPPGPWGLPFVGNIFQLDFGQPHLSIQPFVKKYGNIFSLNLGDITSVVITGLPLIKETFTHIEQNILNRPLSVMQERITNKNGLIFSSGQTWKEQRRFALMTLRNFGLGKKSLEQRMQEEAHYLVEAIREEKGKPFNPHFSINNAVSNIICSVTFGERFEYHDSRFQEMLRLLDEVMYLETTMISQLYNIFPWIMKYIPGSHQTVFRNWEKLKLFVSSMIDDHRKDWNPEEPRDFIDAFLKEMSKYPEKTTSFNEENLICSTLDLFFAGTETTSTTLRWALLYMALYPEVQEKVQAEIDRVIGQKRAASLADRESMPYTNAVIHEVQRMGNIIPLNVPREVAMDTTLNGFHLPKGTMVLTNLTALHRDPKEWATPDVFNPEHFLENGQFKKRESFLPFSMGKRACLGEQLARSELFIFFTSLMQKFTFKPPTNEKLSLKFRNGLTLSPVTHRICAVPRE.

2 consecutive transmembrane segments (helical) span residues isoleucine 12–alanine 32 and asparagine 77–isoleucine 97. A heme-binding site is contributed by cysteine 447.

It belongs to the cytochrome P450 family. Heme serves as cofactor. Expressed in small intestinal enterocytes (at protein level). In the intestinal crypt, expressed at higher levels in the mature villous cells than in undifferentiated crypt cells (at protein level). Expressed in liver, kidney, lung, and olfactory mucosa (at protein level).

It localises to the endoplasmic reticulum membrane. The protein localises to the microsome membrane. The catalysed reaction is an organic molecule + reduced [NADPH--hemoprotein reductase] + O2 = an alcohol + oxidized [NADPH--hemoprotein reductase] + H2O + H(+). The enzyme catalyses (5Z,8Z,11Z,14Z)-eicosatetraenoate + reduced [NADPH--hemoprotein reductase] + O2 = 19-hydroxy-(5Z,8Z,11Z,14Z)-eicosatetraenoate + oxidized [NADPH--hemoprotein reductase] + H2O + H(+). It catalyses the reaction all-trans-retinal + reduced [NADPH--hemoprotein reductase] + O2 = all-trans-retinoate + oxidized [NADPH--hemoprotein reductase] + H2O + 2 H(+). It carries out the reaction 9-cis-retinal + reduced [NADPH--hemoprotein reductase] + O2 = 9-cis-retinoate + oxidized [NADPH--hemoprotein reductase] + H2O + 2 H(+). It participates in lipid metabolism; arachidonate metabolism. Its pathway is cofactor metabolism; retinol metabolism. In terms of biological role, a cytochrome P450 monooxygenase that may play a major role in intestinal retinoid metabolism. Catalyzes the oxidative transformation of all-trans retinal and 9-cis-retinal to the corresponding active forms all-trans and 9-cis retinoic acids. Catalyzes the hydroxylation of carbon-hydrogen bonds. Hydroxylates arachidonic acid predominantly at the omega-1 position. Mechanistically, uses molecular oxygen inserting one oxygen atom into a substrate, and reducing the second into a water molecule, with two electrons provided by NADPH via cytochrome P450 reductase (CPR; NADPH--hemoprotein reductase). This is Cytochrome P450 2J4 from Rattus norvegicus (Rat).